A 303-amino-acid chain; its full sequence is Major fimbrium anchoring subunit FimB (303 aa).

An N-terminal signal peptide occupies residues 1 to 22; the sequence is MNDAKKYIVSVLILLVAGMFGG. Cysteine 23 is lipidated: N-palmitoyl cysteine. Residue cysteine 23 is the site of S-diacylglycerol cysteine attachment.

This sequence belongs to the bacteroidetes fimbrillin superfamily. FimB/Mfa2 family. As to quaternary structure, fimB is not part of the fimbrium itself, but anchors the fimbrium in the outer membrane. Linear, head-to-tail oligomerization of fimbrial subunits mediates assembly of the fimbrium stalk, while the minor components FimC, FimD and FimE probably form the fimbrium tip. The anchoring subunit FimB limits fimbrium length and is important for solid fimbrium attachment to the outer membrane. In its absence, the major fimbriae become very long and are easily detached from the membrane.

The protein localises to the cell outer membrane. Its function is as follows. Anchoring subunit of the major fimbriae. Regulates fimbrial length. These filamentous pili are attached to the cell surface; they mediate biofilm formation, adhesion onto host cells and onto other bacteria that are part of the oral microbiome. Fimbriae of P.gingivalis are major virulence factors. The protein is Major fimbrium anchoring subunit FimB of Porphyromonas gingivalis (strain ATCC BAA-308 / W83).